Reading from the N-terminus, the 178-residue chain is Large ribosomal subunit protein uL10 (178 aa).

It belongs to the universal ribosomal protein uL10 family. Part of the ribosomal stalk of the 50S ribosomal subunit. The N-terminus interacts with L11 and the large rRNA to form the base of the stalk. The C-terminus forms an elongated spine to which L12 dimers bind in a sequential fashion forming a multimeric L10(L12)X complex.

Functionally, forms part of the ribosomal stalk, playing a central role in the interaction of the ribosome with GTP-bound translation factors. This chain is Large ribosomal subunit protein uL10, found in Salinibacter ruber (strain DSM 13855 / M31).